The chain runs to 393 residues: NAD(P)H-quinone oxidoreductase subunit H, chloroplastic (393 aa).

The protein belongs to the complex I 49 kDa subunit family. As to quaternary structure, NDH is composed of at least 16 different subunits, 5 of which are encoded in the nucleus.

Its subcellular location is the plastid. It localises to the chloroplast thylakoid membrane. It catalyses the reaction a plastoquinone + NADH + (n+1) H(+)(in) = a plastoquinol + NAD(+) + n H(+)(out). The enzyme catalyses a plastoquinone + NADPH + (n+1) H(+)(in) = a plastoquinol + NADP(+) + n H(+)(out). In terms of biological role, NDH shuttles electrons from NAD(P)H:plastoquinone, via FMN and iron-sulfur (Fe-S) centers, to quinones in the photosynthetic chain and possibly in a chloroplast respiratory chain. The immediate electron acceptor for the enzyme in this species is believed to be plastoquinone. Couples the redox reaction to proton translocation, and thus conserves the redox energy in a proton gradient. The polypeptide is NAD(P)H-quinone oxidoreductase subunit H, chloroplastic (Angiopteris evecta (Mule's foot fern)).